We begin with the raw amino-acid sequence, 62 residues long: Synergistic-type venom protein C8S2, chain 1 (62 aa).

3 disulfides stabilise this stretch: C3–C24, C17–C42, and C46–C57.

This sequence belongs to the three-finger toxin family. Short-chain subfamily. Aminergic toxin sub-subfamily. In terms of assembly, heterodimer of C8S2 chain 1 and chain 2 (AC P01411); disulfide-linked. As to expression, expressed by the venom gland.

Its subcellular location is the secreted. Functionally, this protein shows a synergetic toxic effect in that it enhances the toxicity of other toxins. This chain is Synergistic-type venom protein C8S2, chain 1, found in Dendroaspis angusticeps (Eastern green mamba).